The chain runs to 44 residues: Photosystem I reaction center subunit IX (44 aa).

A helical membrane pass occupies residues 7-27; it reads YLSTVPVLTTLWFGSLAGLLI.

It belongs to the PsaJ family.

The protein resides in the plastid. Its subcellular location is the chloroplast thylakoid membrane. In terms of biological role, may help in the organization of the PsaE and PsaF subunits. In Dioscorea elephantipes (Elephant's foot yam), this protein is Photosystem I reaction center subunit IX.